A 382-amino-acid polypeptide reads, in one-letter code: Dual-specificity RNA methyltransferase RlmN (382 aa).

Glu-91 acts as the Proton acceptor in catalysis. Residues 97-339 (EEDRGTLCIS…TTIRKTRGDD (243 aa)) form the Radical SAM core domain. An intrachain disulfide couples Cys-104 to Cys-344. [4Fe-4S] cluster contacts are provided by Cys-111, Cys-115, and Cys-118. S-adenosyl-L-methionine is bound by residues 165-166 (GE), Ser-197, 219-221 (SLH), and Asn-301. Catalysis depends on Cys-344, which acts as the S-methylcysteine intermediate.

Belongs to the radical SAM superfamily. RlmN family. The cofactor is [4Fe-4S] cluster.

The protein resides in the cytoplasm. The catalysed reaction is adenosine(2503) in 23S rRNA + 2 reduced [2Fe-2S]-[ferredoxin] + 2 S-adenosyl-L-methionine = 2-methyladenosine(2503) in 23S rRNA + 5'-deoxyadenosine + L-methionine + 2 oxidized [2Fe-2S]-[ferredoxin] + S-adenosyl-L-homocysteine. It carries out the reaction adenosine(37) in tRNA + 2 reduced [2Fe-2S]-[ferredoxin] + 2 S-adenosyl-L-methionine = 2-methyladenosine(37) in tRNA + 5'-deoxyadenosine + L-methionine + 2 oxidized [2Fe-2S]-[ferredoxin] + S-adenosyl-L-homocysteine. Functionally, specifically methylates position 2 of adenine 2503 in 23S rRNA and position 2 of adenine 37 in tRNAs. m2A2503 modification seems to play a crucial role in the proofreading step occurring at the peptidyl transferase center and thus would serve to optimize ribosomal fidelity. The protein is Dual-specificity RNA methyltransferase RlmN of Albidiferax ferrireducens (strain ATCC BAA-621 / DSM 15236 / T118) (Rhodoferax ferrireducens).